We begin with the raw amino-acid sequence, 316 residues long: tRNA dimethylallyltransferase (316 aa).

19-26 (GPTASGKT) contacts ATP. 21 to 26 (TASGKT) provides a ligand contact to substrate. 3 interaction with substrate tRNA regions span residues 44 to 47 (DSAL), 168 to 172 (QRITR), and 249 to 254 (RCVGYR).

The protein belongs to the IPP transferase family. In terms of assembly, monomer. Mg(2+) serves as cofactor.

It catalyses the reaction adenosine(37) in tRNA + dimethylallyl diphosphate = N(6)-dimethylallyladenosine(37) in tRNA + diphosphate. Its function is as follows. Catalyzes the transfer of a dimethylallyl group onto the adenine at position 37 in tRNAs that read codons beginning with uridine, leading to the formation of N6-(dimethylallyl)adenosine (i(6)A). This is tRNA dimethylallyltransferase from Colwellia psychrerythraea (strain 34H / ATCC BAA-681) (Vibrio psychroerythus).